The following is an 819-amino-acid chain: Advillin (819 aa).

Residues 1-731 form a core region; sequence MSLSSAFRAV…YEQLKNELGD (731 aa). A Gelsolin-like 1 repeat occupies 24-73; it reads MELALVPLSAHGNFYEGDCYIVLSTRRVGSLLSQNIHFWIGKDSSQDEQS. A Phosphotyrosine modification is found at tyrosine 85. Residues 109–116 and 135–143 each bind a 1,2-diacyl-sn-glycero-3-phospho-(1D-myo-inositol-4,5-bisphosphate); these read KQGIIYKK and RLLHVKGKR. Gelsolin-like repeat units follow at residues 145-185, 262-306, 403-454, 525-565, and 628-669; these read IQAT…GERL, LSVT…VEKQ, ENLE…DELA, TKAV…DERA, and FLVT…TEKK. Residues 628–819 are required for interaction with F-actin; that stretch reads FLVTEVTDFT…LQLKKERGLF (192 aa). A headpiece region spans residues 732 to 819; sequence ATAIVRITAD…LQLKKERGLF (88 aa). Phosphotyrosine occurs at positions 748 and 758. In terms of domain architecture, HP spans 753–819; sequence DGEPKYYPVE…LQLKKERGLF (67 aa).

It belongs to the villin/gelsolin family. As to quaternary structure, associates (via C-terminus) with actin. Interacts with F-actin. Interacts with SCARF1; the interaction occurs in embryonic dorsal root ganglions at 18 dpc and induces neurite-like outgrowth. Interacts with PLCE1. Interacts with ACTR2 and ACTR3; associates with the ARP2/3 complex. In terms of tissue distribution, most highly expressed in the endometrium of the uterus, the intestinal villi and the testes. Weaker expression also detected in the brain, dorsal root ganglions and on the surface of the tongue.

The protein resides in the cytoplasm. Its subcellular location is the cytoskeleton. It is found in the cell projection. It localises to the lamellipodium. The protein localises to the cell junction. The protein resides in the focal adhesion. Its subcellular location is the neuron projection. It is found in the axon. Ca(2+)-regulated actin-binding protein which plays an important role in actin bundling. May have a unique function in the morphogenesis of neuronal cells which form ganglia. Required for SREC1-mediated regulation of neurite-like outgrowth. Plays a role in regenerative sensory axon outgrowth and remodeling processes after peripheral injury in neonates. Involved in the formation of long fine actin-containing filopodia-like structures in fibroblast. Plays a role in ciliogenesis. In podocytes, controls lamellipodia formation through the regulation of EGF-induced diacylglycerol generation by PLCE1 and ARP2/3 complex assembly. The sequence is that of Advillin from Mus musculus (Mouse).